A 573-amino-acid polypeptide reads, in one-letter code: Sulfite oxidase, mitochondrial (573 aa).

The transit peptide at 1–34 (MRLLRPSWAGLLRGRHHQHQRHHRRLLLTTSRGS) directs the protein to the mitochondrion. Residues 14-26 (GRHHQHQRHHRRL) are compositionally biased toward basic residues. The segment at 14–50 (GRHHQHQRHHRRLLLTTSRGSNGEREEQQHSQWSSPG) is disordered. A Cytochrome b5 heme-binding domain is found at 108–186 (LPTYRAEEVE…LEGFRIGNLE (79 aa)). Heme b contacts are provided by H144 and H168. The interval 190–199 (VTNVDDELGS) is hinge. Positions 200-423 (PWSQEPQRHA…DSHWQQNDYK (224 aa)) are moco domain. Mo-molybdopterin-binding positions include 240-244 (YVRNH), C287, D344, H383, R388, and 399-401 (NVK). The homodimerization stretch occupies residues 424–567 (GFSPSTDWDT…RGVLANAYHK (144 aa)).

Heme b is required as a cofactor. The cofactor is Mo-molybdopterin. Expressed in the ensheathing glia with relatively weak expression in the CNS cortex (at protein level).

The protein localises to the mitochondrion intermembrane space. The catalysed reaction is sulfite + O2 + H2O = sulfate + H2O2. It participates in energy metabolism; sulfur metabolism. Required in ensheathing glial cells for normal larval locomotion. Oxidizes sulfite which is required to maintain glutamate homeostasis and as a consequence, neuronal network function. In Drosophila melanogaster (Fruit fly), this protein is Sulfite oxidase, mitochondrial.